The chain runs to 544 residues: GMP synthase [glutamine-hydrolyzing] (544 aa).

The region spanning threonine 12–glycine 210 is the Glutamine amidotransferase type-1 domain. Residue cysteine 88 is the Nucleophile of the active site. Catalysis depends on residues histidine 184 and glutamate 186. The GMPS ATP-PPase domain occupies tryptophan 211 to arginine 419. Residue serine 239–threonine 245 coordinates ATP. Residues arginine 312, aspartate 481, lysine 536, and glutamate 542 each coordinate XMP.

In terms of assembly, homodimer. Also forms a small population of homotetramers. Mg(2+) is required as a cofactor.

Its subcellular location is the cytoplasm. The protein localises to the cytosol. The enzyme catalyses XMP + L-glutamine + ATP + H2O = GMP + L-glutamate + AMP + diphosphate + 2 H(+). It participates in purine metabolism; GMP biosynthesis; GMP from XMP (L-Gln route): step 1/1. Its activity is regulated as follows. The enzyme is inhibited by ECC1385; although this compound fails to inhibit growth of the organism. Its function is as follows. Catalyzes the conversion of xanthine monophosphate (XMP) to GMP in the presence of glutamine and ATP through an adenyl-XMP intermediate. In Cryptococcus neoformans var. grubii serotype A (strain H99 / ATCC 208821 / CBS 10515 / FGSC 9487) (Filobasidiella neoformans var. grubii), this protein is GMP synthase [glutamine-hydrolyzing].